Here is a 427-residue protein sequence, read N- to C-terminus: Trigger factor (427 aa).

One can recognise a PPIase FKBP-type domain in the interval 160-240; that stretch reads GDTLIGDVTK…VKEVKRLELP (81 aa).

Belongs to the FKBP-type PPIase family. Tig subfamily.

Its subcellular location is the cytoplasm. The enzyme catalyses [protein]-peptidylproline (omega=180) = [protein]-peptidylproline (omega=0). Its function is as follows. Involved in protein export. Acts as a chaperone by maintaining the newly synthesized protein in an open conformation. Functions as a peptidyl-prolyl cis-trans isomerase. The polypeptide is Trigger factor (Chlorobaculum parvum (strain DSM 263 / NCIMB 8327) (Chlorobium vibrioforme subsp. thiosulfatophilum)).